We begin with the raw amino-acid sequence, 116 residues long: Large ribosomal subunit protein uL22 (116 aa).

The protein belongs to the universal ribosomal protein uL22 family. As to quaternary structure, part of the 50S ribosomal subunit.

Functionally, this protein binds specifically to 23S rRNA; its binding is stimulated by other ribosomal proteins, e.g. L4, L17, and L20. It is important during the early stages of 50S assembly. It makes multiple contacts with different domains of the 23S rRNA in the assembled 50S subunit and ribosome. Its function is as follows. The globular domain of the protein is located near the polypeptide exit tunnel on the outside of the subunit, while an extended beta-hairpin is found that lines the wall of the exit tunnel in the center of the 70S ribosome. This is Large ribosomal subunit protein uL22 from Leptospira biflexa serovar Patoc (strain Patoc 1 / Ames).